Here is a 95-residue protein sequence, read N- to C-terminus: FMRFamide-like neuropeptides 16 (95 aa).

Residues 1 to 24 (MSLSGFEFSSIIAVLLLLIQLSSA) form the signal peptide. Residues 25–58 (AVLPVDYASQYGVASADEMTALPEEGSLFAERPA) constitute a propeptide that is removed on maturation. Phenylalanine amide is present on residues F67, F77, and F87. Positions 90-95 (SAPFEQ) are excised as a propeptide.

Belongs to the FARP (FMRFamide related peptide) family.

Its subcellular location is the secreted. FMRFamides and FMRFamide-like peptides are neuropeptides. AQTFVRF-amide inhibits the activity of dissected pharyngeal myogenic muscle system. The chain is FMRFamide-like neuropeptides 16 (flp-16) from Caenorhabditis briggsae.